The sequence spans 773 residues: LON peptidase N-terminal domain and RING finger protein 1 (773 aa).

Residues 1–29 form a disordered region; the sequence is MSSPAVARTSPGGSREMAPAPQGRGRFWE. The stretch at 48–81 is one TPR 1 repeat; the sequence is WELLLRRGELLALGGHLKGALEAFAAALRRGAPA. The segment at 123–159 adopts an RING-type 1 zinc-finger fold; that stretch reads CLGCRGFLSEPVTVPCGHSYCRRCLRRELRARCRLCR. TPR repeat units follow at residues 212–244, 246–278, and 279–312; these read ARAAGRLGELLHQGRYREALAAACEALRAEPSD, IVKIYRAESYAGLQEFKAAIEDLNAVLFQLPDW, and PEVYFRKGKVLCDAGFLGDALQLFLQCLALDEDF. Residues 359–370 are compositionally biased toward polar residues; the sequence is EESQSLNEPSPK. The segment at 359 to 388 is disordered; that stretch reads EESQSLNEPSPKQSEEIPEVTSEPVKGSLN. Ser431 is modified (phosphoserine). The segment at 479-517 adopts an RING-type 2 zinc-finger fold; sequence CSLCMRLFFEPVTTPCGHSFCKNCLERCLDHAPYCPLCK. Residues 558-768 enclose the Lon N-terminal domain; that stretch reads TAELSHLTKN…KIQHILTYFS (211 aa).

The polypeptide is LON peptidase N-terminal domain and RING finger protein 1 (LONRF1) (Homo sapiens (Human)).